A 985-amino-acid chain; its full sequence is Guanine nucleotide exchange protein smcr8b (985 aa).

The region spanning 47 to 225 (ISSAKLKKDF…VKCSSEREPI (179 aa)) is the uDENN FLCN/SMCR8-type domain. Basic and acidic residues predominate over residues 242-292 (NEKSSHTDEISPQEKDGCGNSRKVEVKLENENRSHFEHEQYGKQRKDKPDK). Disordered regions lie at residues 242-301 (NEKS…PLAN), 502-528 (QSQV…SPAE), and 639-659 (EESP…EDNN). In terms of domain architecture, cDENN FLCN/SMCR8-type spans 390–895 (RLKTLEELCD…LINLLVEPKS (506 aa)). Polar residues predominate over residues 502–514 (QSQVQHSTLNTPS). A dDENN FLCN/SMCR8-type domain is found at 904-962 (FTFAQSVQSKLVTKAFLLTFSHGHPSPSRPQGSSGTECFLSELHTDDKKILRYLSELIK).

It belongs to the SMCR8 family. In terms of assembly, component of the C9orf72-SMCR8 complex. The C9orf72-SMCR8 complex associates with the ATG1/ULK1 kinase complex.

The protein localises to the cytoplasm. It is found in the nucleus. Its function is as follows. Component of the C9orf72-SMCR8 complex, a complex that has guanine nucleotide exchange factor (GEF) activity and regulates autophagy. In the complex, C9orf72 and SMCR8 probably constitute the catalytic subunits that promote the exchange of GDP to GTP, converting inactive GDP-bound RAB8A and RAB39B into their active GTP-bound form, thereby promoting autophagosome maturation. The C9orf72-SMCR8 complex also acts as a negative regulator of autophagy initiation by interacting with the ATG1/ULK1 kinase complex and inhibiting its protein kinase activity. The polypeptide is Guanine nucleotide exchange protein smcr8b (smcr8b) (Danio rerio (Zebrafish)).